The sequence spans 150 residues: D-aminoacyl-tRNA deacylase (150 aa).

The Gly-cisPro motif, important for rejection of L-amino acids signature appears at 133-134; the sequence is GP.

This sequence belongs to the DTD family. In terms of assembly, homodimer.

The protein localises to the cytoplasm. It carries out the reaction glycyl-tRNA(Ala) + H2O = tRNA(Ala) + glycine + H(+). The catalysed reaction is a D-aminoacyl-tRNA + H2O = a tRNA + a D-alpha-amino acid + H(+). Its function is as follows. An aminoacyl-tRNA editing enzyme that deacylates mischarged D-aminoacyl-tRNAs. Also deacylates mischarged glycyl-tRNA(Ala), protecting cells against glycine mischarging by AlaRS. Acts via tRNA-based rather than protein-based catalysis; rejects L-amino acids rather than detecting D-amino acids in the active site. By recycling D-aminoacyl-tRNA to D-amino acids and free tRNA molecules, this enzyme counteracts the toxicity associated with the formation of D-aminoacyl-tRNA entities in vivo and helps enforce protein L-homochirality. This chain is D-aminoacyl-tRNA deacylase, found in Micrococcus luteus (strain ATCC 4698 / DSM 20030 / JCM 1464 / CCM 169 / CCUG 5858 / IAM 1056 / NBRC 3333 / NCIMB 9278 / NCTC 2665 / VKM Ac-2230) (Micrococcus lysodeikticus).